Here is a 226-residue protein sequence, read N- to C-terminus: Transcriptional regulatory protein DpiA (226 aa).

In terms of domain architecture, Response regulatory spans 6–122 (TLLIVEDETP…RLGQTLTRFR (117 aa)). Asp57 is subject to 4-aspartylphosphate. Positions 180–199 (AETVAQALTISRTTARRYLE) form a DNA-binding region, H-T-H motif.

Post-translationally, phosphorylated and activated by DpiB.

It localises to the cytoplasm. Functionally, member of the two-component regulatory system DpiA/DpiB, which is essential for expression of citrate-specific fermentation genes and genes involved in plasmid inheritance. Could be involved in response to both the presence of citrate and external redox conditions. In Escherichia coli O157:H7, this protein is Transcriptional regulatory protein DpiA (dpiA).